Consider the following 232-residue polypeptide: Probable dihydroorotate dehydrogenase B (NAD(+)), electron transfer subunit (232 aa).

The FAD-binding FR-type domain occupies 1–86; sequence MYYTRITQIE…RGAFGSAFTP (86 aa). Residues cysteine 202, cysteine 207, cysteine 210, and cysteine 219 each coordinate [2Fe-2S] cluster.

It belongs to the PyrK family. Heterotetramer of 2 PyrK and 2 PyrD type B subunits. [2Fe-2S] cluster serves as cofactor. Requires FAD as cofactor.

It functions in the pathway pyrimidine metabolism; UMP biosynthesis via de novo pathway; orotate from (S)-dihydroorotate (NAD(+) route): step 1/1. Responsible for channeling the electrons from the oxidation of dihydroorotate from the FMN redox center in the PyrD type B subunit to the ultimate electron acceptor NAD(+). The sequence is that of Probable dihydroorotate dehydrogenase B (NAD(+)), electron transfer subunit from Archaeoglobus fulgidus (strain ATCC 49558 / DSM 4304 / JCM 9628 / NBRC 100126 / VC-16).